The sequence spans 313 residues: Aspartate carbamoyltransferase catalytic subunit (313 aa).

Positions 59 and 60 each coordinate carbamoyl phosphate. L-aspartate is bound at residue lysine 87. Carbamoyl phosphate-binding residues include arginine 109, histidine 137, and glutamine 140. Arginine 170 and arginine 224 together coordinate L-aspartate. 2 residues coordinate carbamoyl phosphate: glycine 265 and proline 266.

It belongs to the aspartate/ornithine carbamoyltransferase superfamily. ATCase family. Heterododecamer (2C3:3R2) of six catalytic PyrB chains organized as two trimers (C3), and six regulatory PyrI chains organized as three dimers (R2).

The catalysed reaction is carbamoyl phosphate + L-aspartate = N-carbamoyl-L-aspartate + phosphate + H(+). It functions in the pathway pyrimidine metabolism; UMP biosynthesis via de novo pathway; (S)-dihydroorotate from bicarbonate: step 2/3. Its function is as follows. Catalyzes the condensation of carbamoyl phosphate and aspartate to form carbamoyl aspartate and inorganic phosphate, the committed step in the de novo pyrimidine nucleotide biosynthesis pathway. This chain is Aspartate carbamoyltransferase catalytic subunit, found in Rhizobium meliloti (strain 1021) (Ensifer meliloti).